Here is a 62-residue protein sequence, read N- to C-terminus: Large ribosomal subunit protein bL28 (62 aa).

The protein belongs to the bacterial ribosomal protein bL28 family.

The polypeptide is Large ribosomal subunit protein bL28 (Streptococcus equi subsp. equi (strain 4047)).